The sequence spans 355 residues: Peptide chain release factor 1 (355 aa).

Gln-231 is subject to N5-methylglutamine. Positions Ser-280–Lys-291 are enriched in basic and acidic residues. Residues Ser-280–Ile-303 form a disordered region.

It belongs to the prokaryotic/mitochondrial release factor family. In terms of processing, methylated by PrmC. Methylation increases the termination efficiency of RF1.

Its subcellular location is the cytoplasm. In terms of biological role, peptide chain release factor 1 directs the termination of translation in response to the peptide chain termination codons UAG and UAA. In Campylobacter jejuni subsp. jejuni serotype O:6 (strain 81116 / NCTC 11828), this protein is Peptide chain release factor 1.